A 360-amino-acid polypeptide reads, in one-letter code: MKNIFLHSLSLENYRNFKNLELKTDNTPIILIGENGSGKTNILEAISLFYPGRGLRSAKLANVCKTSEDHCLVKALLQSKLGLAEFTTQFKRSSNRRITEYNESKIANNELSKFTSMVWLTPHMEGIFTSGSNDRRKFLDRIVYNFDPKHAELVSKYEYYMHERNKILVEDIRDDNWLKIIEEKMADISNHIANNRLKTLEFMQQAIDDLENEFPKADLSIDGIVEQKILNGKENIVSFITAELYQTRSKDKLLGRTSFGVHKSDFLVKHQKKNILAKFCSTGEQKAILIAIILAEMNYAIKLTKIAPILLLDEVFVHLDDKRRQYLIEFLTGLNMQLWVTTTNLEGIENFATKAQLIKL.

Residue 33 to 40 (GENGSGKT) participates in ATP binding.

The protein belongs to the RecF family.

The protein localises to the cytoplasm. In terms of biological role, the RecF protein is involved in DNA metabolism; it is required for DNA replication and normal SOS inducibility. RecF binds preferentially to single-stranded, linear DNA. It also seems to bind ATP. The sequence is that of DNA replication and repair protein RecF from Rickettsia peacockii (strain Rustic).